The chain runs to 681 residues: Macrolide export ATP-binding/permease protein MacB (681 aa).

Residues 6-244 (LKLAAVTRRF…FAEVGVGAAA (239 aa)) form the ABC transporter domain. 42–49 (GASGSGKS) is a binding site for ATP. Residues 246–274 (TETAADTRSAPASGDAPPPANNDTAADPA) are disordered. Helical transmembrane passes span 306 to 326 (LLTMLGIIIGITSVVSIVAVG), 554 to 574 (LTLLLSLIAVISLVVGGIGVM), 611 to 631 (LVCLLGGTIGIALSFGLGALF), and 644 to 664 (AGAIVTAFVCSTLTGVIFGFM).

Belongs to the ABC transporter superfamily. Macrolide exporter (TC 3.A.1.122) family. Homodimer.

Its subcellular location is the cell inner membrane. Non-canonical ABC transporter that contains transmembrane domains (TMD), which form a pore in the inner membrane, and an ATP-binding domain (NBD), which is responsible for energy generation. Confers resistance against macrolides. The polypeptide is Macrolide export ATP-binding/permease protein MacB (Burkholderia cenocepacia (strain HI2424)).